The following is a 121-amino-acid chain: Large ribosomal subunit protein uL22 (121 aa).

The protein belongs to the universal ribosomal protein uL22 family. In terms of assembly, part of the 50S ribosomal subunit.

In terms of biological role, this protein binds specifically to 23S rRNA; its binding is stimulated by other ribosomal proteins, e.g. L4, L17, and L20. It is important during the early stages of 50S assembly. It makes multiple contacts with different domains of the 23S rRNA in the assembled 50S subunit and ribosome. Functionally, the globular domain of the protein is located near the polypeptide exit tunnel on the outside of the subunit, while an extended beta-hairpin is found that lines the wall of the exit tunnel in the center of the 70S ribosome. The chain is Large ribosomal subunit protein uL22 from Synechocystis sp. (strain ATCC 27184 / PCC 6803 / Kazusa).